We begin with the raw amino-acid sequence, 338 residues long: Nicotinate-nucleotide--dimethylbenzimidazole phosphoribosyltransferase (338 aa).

The active-site Proton acceptor is the Glu-306.

It belongs to the CobT family.

It catalyses the reaction 5,6-dimethylbenzimidazole + nicotinate beta-D-ribonucleotide = alpha-ribazole 5'-phosphate + nicotinate + H(+). The protein operates within nucleoside biosynthesis; alpha-ribazole biosynthesis; alpha-ribazole from 5,6-dimethylbenzimidazole: step 1/2. Its function is as follows. Catalyzes the synthesis of alpha-ribazole-5'-phosphate from nicotinate mononucleotide (NAMN) and 5,6-dimethylbenzimidazole (DMB). This is Nicotinate-nucleotide--dimethylbenzimidazole phosphoribosyltransferase from Cereibacter sphaeroides (strain KD131 / KCTC 12085) (Rhodobacter sphaeroides).